The sequence spans 155 residues: Small ribosomal subunit protein uS7 (155 aa).

Belongs to the universal ribosomal protein uS7 family. As to quaternary structure, part of the 30S ribosomal subunit. Contacts proteins S9 and S11.

One of the primary rRNA binding proteins, it binds directly to 16S rRNA where it nucleates assembly of the head domain of the 30S subunit. Is located at the subunit interface close to the decoding center, probably blocks exit of the E-site tRNA. This is Small ribosomal subunit protein uS7 from Corynebacterium diphtheriae (strain ATCC 700971 / NCTC 13129 / Biotype gravis).